The primary structure comprises 237 residues: Uridylate kinase (237 aa).

Residue 12–15 coordinates ATP; that stretch reads KLSG. Residues 20–25 form an involved in allosteric activation by GTP region; sequence GDEGFG. Glycine 54 serves as a coordination point for UMP. Glycine 55 and arginine 59 together coordinate ATP. UMP-binding positions include aspartate 74 and 135–142; that span reads TGSPFFTT. ATP-binding residues include threonine 162, tyrosine 168, and aspartate 171.

The protein belongs to the UMP kinase family. Homohexamer.

It localises to the cytoplasm. The enzyme catalyses UMP + ATP = UDP + ADP. It participates in pyrimidine metabolism; CTP biosynthesis via de novo pathway; UDP from UMP (UMPK route): step 1/1. Allosterically activated by GTP. Inhibited by UTP. Functionally, catalyzes the reversible phosphorylation of UMP to UDP. The chain is Uridylate kinase from Mannheimia succiniciproducens (strain KCTC 0769BP / MBEL55E).